Consider the following 366-residue polypeptide: Cobalt-precorrin-5B C(1)-methyltransferase (366 aa).

This sequence belongs to the CbiD family.

The catalysed reaction is Co-precorrin-5B + S-adenosyl-L-methionine = Co-precorrin-6A + S-adenosyl-L-homocysteine. It participates in cofactor biosynthesis; adenosylcobalamin biosynthesis; cob(II)yrinate a,c-diamide from sirohydrochlorin (anaerobic route): step 6/10. Its function is as follows. Catalyzes the methylation of C-1 in cobalt-precorrin-5B to form cobalt-precorrin-6A. This Pseudomonas paraeruginosa (strain DSM 24068 / PA7) (Pseudomonas aeruginosa (strain PA7)) protein is Cobalt-precorrin-5B C(1)-methyltransferase.